Consider the following 200-residue polypeptide: GTP-binding protein rho5 (200 aa).

13 to 20 (GDGACGKT) provides a ligand contact to GTP. The Effector region motif lies at 35-43 (YVPTVFENY). GTP-binding positions include 60–64 (DTAGQ) and 118–121 (CKVD). Cysteine 197 bears the Cysteine methyl ester mark. Cysteine 197 carries the S-geranylgeranyl cysteine lipid modification. Positions 198-200 (ILL) are cleaved as a propeptide — removed in mature form.

The protein belongs to the small GTPase superfamily. Rho family.

The protein localises to the cell membrane. In Schizosaccharomyces pombe (strain 972 / ATCC 24843) (Fission yeast), this protein is GTP-binding protein rho5 (rho5).